The primary structure comprises 273 residues: Undecaprenyl-diphosphatase (273 aa).

Helical transmembrane passes span 3–23, 48–68, 89–109, 116–136, 151–171, 192–212, 225–245, and 253–273; these read IIELIKALILGLVEGATEFAP, GANTFKVVIQLGSVLAAVVVF, LTLMHIFVGLLPAGVLGVLFE, LFSTKTVLIGLVLGALLMIAA, ITYKQAFIVGLVQCLSLWPGF, ADFTFIMAVPIMAGASAISLL, FFVVGFISAFVFALLAIRFFL, and LVPFAIYRIVLAAVIYVVYFA.

It belongs to the UppP family.

It is found in the cell membrane. It carries out the reaction di-trans,octa-cis-undecaprenyl diphosphate + H2O = di-trans,octa-cis-undecaprenyl phosphate + phosphate + H(+). In terms of biological role, catalyzes the dephosphorylation of undecaprenyl diphosphate (UPP). Confers resistance to bacitracin. This is Undecaprenyl-diphosphatase from Anoxybacillus flavithermus (strain DSM 21510 / WK1).